We begin with the raw amino-acid sequence, 501 residues long: Cytochrome P450 71B3 (501 aa).

Residues 2 to 22 (SILLYFFFLPVILSLIFMKKF) traverse the membrane as a helical segment. A heme-binding site is contributed by Cys445.

The protein belongs to the cytochrome P450 family. It depends on heme as a cofactor.

Its subcellular location is the membrane. The chain is Cytochrome P450 71B3 (CYP71B3) from Arabidopsis thaliana (Mouse-ear cress).